Here is a 90-residue protein sequence, read N- to C-terminus: Large ribosomal subunit protein bL27 (90 aa).

A disordered region spans residues 1-20; it reads MAHKKAGGSSRNGRDSAGKR.

This sequence belongs to the bacterial ribosomal protein bL27 family.

In Nitrobacter hamburgensis (strain DSM 10229 / NCIMB 13809 / X14), this protein is Large ribosomal subunit protein bL27.